Consider the following 342-residue polypeptide: Inactive chitinase-like protein 2 (342 aa).

Residues 1–19 (MKEIVRALEGYGPPKDKAA) form the signal peptide. Residues 20–60 (EQCGWQAGGALCPGGLCCSQYGWCANTPEYCGSGCQSQCDG) enclose the Chitin-binding type-1 domain. Intrachain disulfides connect C22–C37, C31–C43, C36–C80, C84–C88, C122–C184, C196–C204, and C301–C333.

The protein belongs to the glycosyl hydrolase 19 family. Chitinase class I subfamily.

Its function is as follows. Inactive chitinase-like protein that does not exhibit hydrolytic activity toward chitin. Binds strongly to chitin and possesses antifungal activity toward the fungal pathogen Altenaria alternata in plate assays. Probably involved in defense against fungal pathogens through a mechanism that only involves carbohydrate binding. The protein is Inactive chitinase-like protein 2 of Hevea brasiliensis (Para rubber tree).